A 203-amino-acid polypeptide reads, in one-letter code: Cytochrome c biogenesis ATP-binding export protein CcmA (203 aa).

The ABC transporter domain occupies L2–A203. G34–T41 serves as a coordination point for ATP.

It belongs to the ABC transporter superfamily. CcmA exporter (TC 3.A.1.107) family. The complex is composed of two ATP-binding proteins (CcmA) and two transmembrane proteins (CcmB).

Its subcellular location is the cell inner membrane. The enzyme catalyses heme b(in) + ATP + H2O = heme b(out) + ADP + phosphate + H(+). Part of the ABC transporter complex CcmAB involved in the biogenesis of c-type cytochromes; once thought to export heme, this seems not to be the case, but its exact role is uncertain. Responsible for energy coupling to the transport system. This Pseudomonas aeruginosa protein is Cytochrome c biogenesis ATP-binding export protein CcmA.